Reading from the N-terminus, the 381-residue chain is Acetylornithine deacetylase (381 aa).

Residue His-79 participates in Zn(2+) binding. Asp-81 is a catalytic residue. Asp-111 is a binding site for Zn(2+). Glu-143 is a catalytic residue. Positions 144, 168, and 354 each coordinate Zn(2+).

It belongs to the peptidase M20A family. ArgE subfamily. As to quaternary structure, homodimer. It depends on Zn(2+) as a cofactor. Co(2+) is required as a cofactor. The cofactor is glutathione.

Its subcellular location is the cytoplasm. The enzyme catalyses N(2)-acetyl-L-ornithine + H2O = L-ornithine + acetate. Its pathway is amino-acid biosynthesis; L-arginine biosynthesis; L-ornithine from N(2)-acetyl-L-ornithine (linear): step 1/1. In terms of biological role, catalyzes the hydrolysis of the amide bond of N(2)-acetylated L-amino acids. Cleaves the acetyl group from N-acetyl-L-ornithine to form L-ornithine, an intermediate in L-arginine biosynthesis pathway, and a branchpoint in the synthesis of polyamines. This Buchnera aphidicola subsp. Acyrthosiphon pisum (strain APS) (Acyrthosiphon pisum symbiotic bacterium) protein is Acetylornithine deacetylase.